Consider the following 425-residue polypeptide: Monoacylglycerol lipase ABHD2 (425 aa).

The Cytoplasmic portion of the chain corresponds to 1-9; sequence MNAMLETPE. The chain crosses the membrane as a helical; Signal-anchor for type II membrane protein span at residues 10-30; sequence LPAVFDGVKLAAVAAVLYVIV. The Extracellular segment spans residues 31–425; the sequence is RCLNLKSPTA…DTEQMEAELE (395 aa). Residues 128–382 form the AB hydrolase-1 domain; sequence MVICPGIANH…HGGHLGFFEG (255 aa). N-linked (GlcNAc...) asparagine glycosylation is present at N136. The active-site Nucleophile is S207. Catalysis depends on charge relay system residues D345 and H376. A glycan (N-linked (GlcNAc...) asparagine) is linked at N410.

It belongs to the AB hydrolase superfamily. AB hydrolase 4 family. Widely expressed with higher expression in testis. Expressed by vascular smooth muscle cells, non vascular smooth muscle cells and heart.

The protein localises to the cell membrane. It is found in the cytoplasmic vesicle. The protein resides in the secretory vesicle. Its subcellular location is the acrosome membrane. The enzyme catalyses Hydrolyzes glycerol monoesters of long-chain fatty acids.. The catalysed reaction is an acetyl ester + H2O = an aliphatic alcohol + acetate + H(+). It catalyses the reaction a triacylglycerol + H2O = a diacylglycerol + a fatty acid + H(+). It carries out the reaction 2-(5Z,8Z,11Z,14Z-eicosatetraenoyl)-glycerol + H2O = glycerol + (5Z,8Z,11Z,14Z)-eicosatetraenoate + H(+). The enzyme catalyses a butanoate ester + H2O = an aliphatic alcohol + butanoate + H(+). The catalysed reaction is hexadecanoate ester + H2O = an aliphatic alcohol + hexadecanoate + H(+). With respect to regulation, acylglycerol lipase activity is activated upon binding to progesterone. Progesterone-dependent acylglycerol lipase that catalyzes hydrolysis of endocannabinoid arachidonoylglycerol (AG) from cell membrane. Acts as a progesterone receptor: progesterone-binding activates the acylglycerol lipase activity, mediating degradation of 1-arachidonoylglycerol (1AG) and 2-arachidonoylglycerol (2AG) to glycerol and arachidonic acid (AA). Also displays an ester hydrolase activity against acetyl ester, butanoate ester and hexadecanoate ester. Plays a key role in sperm capacitation in response to progesterone by mediating degradation of 2AG, an inhibitor of the sperm calcium channel CatSper, leading to calcium influx via CatSper and sperm activation. Involved in acrosomal reaction. May also play a role in smooth muscle cells migration. This is Monoacylglycerol lipase ABHD2 (Abhd2) from Mus musculus (Mouse).